A 136-amino-acid chain; its full sequence is NADPH-dependent 7-cyano-7-deazaguanine reductase (136 aa).

Cys50 (thioimide intermediate) is an active-site residue. Asp57 serves as the catalytic Proton donor. Substrate-binding positions include Tyr72–Leu74 and His91–Glu92.

Belongs to the GTP cyclohydrolase I family. QueF type 1 subfamily.

The protein resides in the cytoplasm. The enzyme catalyses 7-aminomethyl-7-carbaguanine + 2 NADP(+) = 7-cyano-7-deazaguanine + 2 NADPH + 3 H(+). Its pathway is tRNA modification; tRNA-queuosine biosynthesis. Functionally, catalyzes the NADPH-dependent reduction of 7-cyano-7-deazaguanine (preQ0) to 7-aminomethyl-7-deazaguanine (preQ1). The protein is NADPH-dependent 7-cyano-7-deazaguanine reductase of Prochlorococcus marinus (strain AS9601).